A 333-amino-acid polypeptide reads, in one-letter code: Adenosine deaminase (333 aa).

Residues His12 and His14 each coordinate Zn(2+). Substrate is bound by residues His14, Asp16, and Gly170. His197 contributes to the Zn(2+) binding site. The Proton donor role is filled by Glu200. A Zn(2+)-binding site is contributed by Asp278. Asp279 is a substrate binding site.

Belongs to the metallo-dependent hydrolases superfamily. Adenosine and AMP deaminases family. Adenosine deaminase subfamily. Zn(2+) serves as cofactor.

It catalyses the reaction adenosine + H2O + H(+) = inosine + NH4(+). It carries out the reaction 2'-deoxyadenosine + H2O + H(+) = 2'-deoxyinosine + NH4(+). Catalyzes the hydrolytic deamination of adenosine and 2-deoxyadenosine. The chain is Adenosine deaminase from Aliivibrio fischeri (strain ATCC 700601 / ES114) (Vibrio fischeri).